We begin with the raw amino-acid sequence, 126 residues long: Flagellar assembly factor FliW (126 aa).

Belongs to the FliW family. Interacts with translational regulator CsrA and flagellin(s).

It localises to the cytoplasm. Acts as an anti-CsrA protein, binds CsrA and prevents it from repressing translation of its target genes, one of which is flagellin. Binds to flagellin and participates in the assembly of the flagellum. This is Flagellar assembly factor FliW from Sulfurimonas denitrificans (strain ATCC 33889 / DSM 1251) (Thiomicrospira denitrificans (strain ATCC 33889 / DSM 1251)).